The sequence spans 625 residues: Phosphomethylpyrimidine synthase (625 aa).

Substrate is bound by residues asparagine 230, methionine 259, tyrosine 288, histidine 324, 344–346 (SRG), 385–388 (DGLR), and glutamate 424. Histidine 428 is a binding site for Zn(2+). Tyrosine 451 contributes to the substrate binding site. Zn(2+) is bound at residue histidine 492. [4Fe-4S] cluster is bound by residues cysteine 572, cysteine 575, and cysteine 580.

It belongs to the ThiC family. As to quaternary structure, homodimer. It depends on [4Fe-4S] cluster as a cofactor.

The catalysed reaction is 5-amino-1-(5-phospho-beta-D-ribosyl)imidazole + S-adenosyl-L-methionine = 4-amino-2-methyl-5-(phosphooxymethyl)pyrimidine + CO + 5'-deoxyadenosine + formate + L-methionine + 3 H(+). The protein operates within cofactor biosynthesis; thiamine diphosphate biosynthesis. Functionally, catalyzes the synthesis of the hydroxymethylpyrimidine phosphate (HMP-P) moiety of thiamine from aminoimidazole ribotide (AIR) in a radical S-adenosyl-L-methionine (SAM)-dependent reaction. In Xanthomonas oryzae pv. oryzae (strain MAFF 311018), this protein is Phosphomethylpyrimidine synthase.